A 784-amino-acid polypeptide reads, in one-letter code: Lon protease (784 aa).

The Lon N-terminal domain maps to 11–204 (IPVLPLRDVV…YLMAMMESEI (194 aa)). Position 356 to 363 (356 to 363 (GPPGVGKT)) interacts with ATP. In terms of domain architecture, Lon proteolytic spans 592-773 (ENRVGQVTGL…EEVLALALQN (182 aa)). Residues Ser-679 and Lys-722 contribute to the active site.

The protein belongs to the peptidase S16 family. As to quaternary structure, homohexamer. Organized in a ring with a central cavity.

It localises to the cytoplasm. It catalyses the reaction Hydrolysis of proteins in presence of ATP.. Functionally, ATP-dependent serine protease that mediates the selective degradation of mutant and abnormal proteins as well as certain short-lived regulatory proteins. Required for cellular homeostasis and for survival from DNA damage and developmental changes induced by stress. Degrades polypeptides processively to yield small peptide fragments that are 5 to 10 amino acids long. Binds to DNA in a double-stranded, site-specific manner. The sequence is that of Lon protease from Erwinia amylovora (Fire blight bacteria).